A 223-amino-acid polypeptide reads, in one-letter code: Cytidylate kinase (223 aa).

10-18 serves as a coordination point for ATP; sequence GPASSGKST.

Belongs to the cytidylate kinase family. Type 1 subfamily.

The protein localises to the cytoplasm. It catalyses the reaction CMP + ATP = CDP + ADP. The catalysed reaction is dCMP + ATP = dCDP + ADP. This chain is Cytidylate kinase, found in Streptococcus pneumoniae (strain Taiwan19F-14).